Reading from the N-terminus, the 178-residue chain is Large ribosomal subunit protein bL25 (178 aa).

This sequence belongs to the bacterial ribosomal protein bL25 family. CTC subfamily. Part of the 50S ribosomal subunit; part of the 5S rRNA/L5/L18/L25 subcomplex. Contacts the 5S rRNA. Binds to the 5S rRNA independently of L5 and L18.

In terms of biological role, this is one of the proteins that binds to the 5S RNA in the ribosome where it forms part of the central protuberance. This is Large ribosomal subunit protein bL25 from Campylobacter hominis (strain ATCC BAA-381 / DSM 21671 / CCUG 45161 / LMG 19568 / NCTC 13146 / CH001A).